The following is a 631-amino-acid chain: Altered inheritance of mitochondria protein 9, mitochondrial (631 aa).

The N-terminal 41 residues, 1 to 41 (MLSRVVRQRSRSAISSFKLRAHAAFAETRIGVGISVQATRL), are a transit peptide targeting the mitochondrion.

It belongs to the AIM9 family.

It localises to the mitochondrion. This is Altered inheritance of mitochondria protein 9, mitochondrial (AIM9) from Scheffersomyces stipitis (strain ATCC 58785 / CBS 6054 / NBRC 10063 / NRRL Y-11545) (Yeast).